The following is a 957-amino-acid chain: Ribonuclease 3-like protein 3 (957 aa).

One can recognise an RNase III 1 domain in the interval 4-142; the sequence is VEAVEKILNY…IAATVFIDVN (139 aa). The DRBM 1 domain maps to 307-382; the sequence is NGRGELIEIC…AYHMIRALES (76 aa). Residues 415–551 form the RNase III 2 domain; sequence VEAVEKILNY…VAGAVYIDVK (137 aa). DRBM domains follow at residues 566–645 and 837–912; these read EPIY…KLSE and DEKG…ALES.

Functionally, ribonuclease that cleaves double-stranded RNA (dsRNA). The sequence is that of Ribonuclease 3-like protein 3 (RTL3) from Arabidopsis thaliana (Mouse-ear cress).